We begin with the raw amino-acid sequence, 629 residues long: Coiled-coil domain-containing protein 120 (629 aa).

The segment at 31–70 (RLRGLLDRQRALQEALSVKLQELRKVCLQEAELTGQLPPE) is involved in CYTH2-binding. Residues 109–173 (ELALEALERE…LRDFRARLGL (65 aa)) adopt a coiled-coil conformation. 2 stretches are compositionally biased toward low complexity: residues 209 to 219 (HSESSSLSESG) and 279 to 294 (ASPT…SASS). A disordered region spans residues 209-356 (HSESSSLSES…LFAARTRRSN (148 aa)). The segment covering 323–332 (RQWSGSQDSQ) has biased composition (polar residues). Residues serine 355 and serine 357 each carry the phosphoserine modification. Disordered stretches follow at residues 399 to 432 (QPVP…GAPR) and 602 to 629 (PSQA…FTDG). Low complexity predominate over residues 418–432 (ARPSSAAPASRGAPR). Arginine 432 carries the omega-N-methylarginine modification.

Interacts with NIN and CEP170; leading to recruit them to centrosomes. Interacts with CYTH2; this interaction is direct and stabilizes CCDC120, possibly by preventing ubiquitination. Post-translationally, ubiquitinated; interaction with CYTH2 may prevent ubiquitination.

The protein resides in the cytoplasm. It is found in the cytoskeleton. Its subcellular location is the microtubule organizing center. The protein localises to the centrosome. It localises to the centriole. The protein resides in the cell projection. It is found in the neuron projection. Its subcellular location is the growth cone. The protein localises to the endosome. In terms of biological role, centriolar protein required for centriole subdistal appendage assembly and microtubule anchoring in interphase cells. Together with CCDC68, cooperate with subdistal appendage components ODF2, NIN and CEP170 for hierarchical subdistal appendage assembly. Recruits NIN and CEP170 to centrosomes. Also required for neurite growth. Localizes CYTH2 to vesicles to allow its transport along neurites, and subsequent ARF6 activation and neurite growth. The polypeptide is Coiled-coil domain-containing protein 120 (Mus musculus (Mouse)).